A 1950-amino-acid chain; its full sequence is E3 ubiquitin-protein ligase UBR1 (1950 aa).

His-118, Cys-123, Cys-136, Cys-139, Cys-148, Cys-151, His-157, His-160, His-161, Cys-175, Cys-177, and Cys-189 together coordinate Zn(2+). A UBR-type zinc finger spans residues 121 to 194; the sequence is RNCGRKFKIG…SPLHCKAEEQ (74 aa). Ser-296 and Ser-300 each carry phosphoserine. The segment at 678–681 is ubiquitin-binding loop; the sequence is HVLH. Zn(2+) is bound at residue Asp-952. A UBC2-binding region (U2BR) region spans residues 1165 to 1200; sequence KERKRRLAKKHQARLLAKFNNQQTKFMKEHESEFDE. Residues Cys-1220, Cys-1223, Cys-1295, His-1297, His-1300, Cys-1303, Cys-1320, and Cys-1323 each coordinate Zn(2+). The RING-type; atypical zinc finger occupies 1220-1324; it reads CALCQDSSST…SNAFICPLCQ (105 aa). The cap helical domain (CHD) stretch occupies residues 1333 to 1665; the sequence is LCQTSKANTG…YEYCGIIKLI (333 aa). 6 residues coordinate Zn(2+): Cys-1703, Cys-1706, His-1722, Cys-1727, His-1763, and Asp-1775. Disordered regions lie at residues 1826–1846 and 1893–1950; these read RPRRIPPTDEDDEDMEEGEDG and TLQP…REIW. 2 stretches are compositionally biased toward acidic residues: residues 1833–1846 and 1934–1950; these read TDEDDEDMEEGEDG and DEDDSDDNDDSDEREIW. The residue at position 1938 (Ser-1938) is a Phosphoserine.

The protein belongs to the E3 ubiquitin-protein ligase UBR1-like family. As to quaternary structure, interacts with UBC2. Interacts with RPN2, RPT1 and RPT6 from the 26S proteasome.

It catalyses the reaction S-ubiquitinyl-[E2 ubiquitin-conjugating enzyme]-L-cysteine + [acceptor protein]-L-lysine = [E2 ubiquitin-conjugating enzyme]-L-cysteine + N(6)-ubiquitinyl-[acceptor protein]-L-lysine.. Its pathway is protein modification; protein ubiquitination. Ubiquitin ligase protein which is a component of the N-end rule pathway. Recognizes and binds to proteins bearing specific N-terminal residues that are destabilizing according to the N-end rule, leading to their ubiquitination and subsequent degradation. Recognizes both type-1 and type-2 N-degrons, containing positively charged amino acids (Arg, Lys and His) and bulky and hydrophobic amino acids, respectively. The chain is E3 ubiquitin-protein ligase UBR1 from Saccharomyces cerevisiae (strain ATCC 204508 / S288c) (Baker's yeast).